We begin with the raw amino-acid sequence, 103 residues long: Large ribosomal subunit protein bL21 (103 aa).

This sequence belongs to the bacterial ribosomal protein bL21 family. In terms of assembly, part of the 50S ribosomal subunit. Contacts protein L20.

In terms of biological role, this protein binds to 23S rRNA in the presence of protein L20. This is Large ribosomal subunit protein bL21 from Wigglesworthia glossinidia brevipalpis.